Consider the following 1935-residue polypeptide: MFSLPSFLTTFSFTLPSLPSISLPANIQRRFLSYVLKRTLGRFVSHQALDAERIQAQVSEGWVEIENLEIECSEINNYIPPPLPLSLTSGTINKLTAKLPFPNLWSDPLQVSLDTLTLDFTLSSPSPLSRGRAATRPEHHDLAESVTSAADDFLHHELDAYEEKELEGSIRQSLILSQTDPFISDVPGGFPLGSPGEISPGRPLPANMESTTVLAGMVERILARLEFRVEKIKIRLVIEDEEDVVELTVGRIRYADESEAQTNDDGKSTTRAIRISNISLDIVPSQRKPPSLVIPQRQSLEPSVSSSTSTASTSSGNDYSDMFMSQAVVDLRQSLLTPEQISEPANEQTVHESNMFYSALSQPNESEPGASTGIKRSGISQNPKLADEIEEERSRSETPTPETKPQPSGIPVLSFGQEDVVLHMRTTRPLISAGHQTSFNDNKPTVEMNITIGTITTVLLPSHLKLFISALQTLQALCQKDDVPAAKDKPAQSTSPQTRLTATTKLKAFYVSLVYDLSAETSLNLHSTMASHLTRPTNPIPYPHLRFRLDTLVASYQSPGHSNPSRPAFTRPTPNMSTANLRRKSSGHARFGSLPSNLTVNVGDISLFEWMGEGMIAPVILFDPGLKHQYDLPSAPPHKGQAGFPECECRDWREEKKTGSEKAWRVRPRGRGILKGGARATTEDEGPVVHVRQDLGSDSAAVINLQSLHVFVDLSLIERLLPLLRSVTPLIHPPEPTPAWLQSVPSQSISEEITPESIISSLSAPPPTARGKKMKADIRCDLVRLSVRCPAPPPEPAERQIGDGRQLRSGIVFVDVHGLKSRFMDTSRTGTRPASSEVANVEFEQTLIFFASVSQHYAYPFLIFAPLSPEPGEEDIPLLPSISLSSFPQASSLPASSIAKTTLVTCKMPAIRASVHHPTVTGLQYFADDVTRWLDVAFADGSAKPRDELKMIGSRFFGGSKGSEASSEIDEPYDVEEVAAGMKVEIEISEIDMGLYVPRLDASGERVFSFKANDLGVRMETHPEENETALELSIMDLDFSDVSSTPLRILGRTTPFTLTSHQAPVVYLRFVSSTDLRTTLKESNISVALSHFTFAVHKEIAWLHEIAQFAKPPKGVFENLSPTDLTRLSINLSSASFLLVPPNLPGSIVILVREVEGKTEIPKGATDSVLEVGMSGLGALAVEGESGPLEVSSDLADVWKKAGYAQLAEVMVLELRLMRELVAAGEVSLDITQAQFKVTACADSLATFAEIATDFGHSLDENAFNLLPEIVSHSDTDMIEDDLPHNLDYLDHATRISKHYPSMDRTTGENLRAWHTPEEGLEEGEWENGESGETIRAFGGEIEEEEGYWEGLPILNDVYSADQKPGKIHIRVLDASLKIFLHDGYDWPRTRKAIEDEVRAVRRRLERIRQLLASGQKADESIENATSSVLFNSIYIGLEQKGEMGLSTMGMGKMDEKALMAAIDEELDGMETESGSSWQTLPAGVGAGPSAVHQAHKKTRLKGKRLVRSKKAQIEITLSGIKTDVDLYPTEESTSSRVHFTAKEMEILDHIKTSTWKKFLTEMKADNRGNIRETDADMLRIELVGVRLKEDEEELRLRAKILPLRLHVDQDALDFLKRFFSFKAPPMTSARPLAQHTTSSTPDLYFQHVEIFPIQLKLDYKPKRVDFRALREGKTIELMNFFHFEGAEMTLRHITLSGITGLERLGTTLQDLWTPDVKANQLADVISGVSPIRSMVNVGSGVADLILLPIEQYRKDGRIAKGVQRGTNSFVKSTALEVMKLGARLATGTQVILERAEGVLGGKSGEDVVGQVQGLSTNAFGVDSGMLEGGSSSEDEQEAISRYADQPESMKEGVQAAYKSLSKNVNAAAQTILAVPMEVYERSGDDGPLKAVIRAVPIAVLKPMIGTTEAVSKTLLGMRNSLDPSARRELDDKYK.

A Chorein N-terminal domain is found at 30–121 (RFLSYVLKRT…SLDTLTLDFT (92 aa)). Disordered regions lie at residues 286–319 (QRKP…GNDY) and 360–412 (LSQP…GIPV). Over residues 303 to 315 (SVSSSTSTASTSS) the composition is skewed to low complexity. A compositionally biased stretch (polar residues) spans 397-406 (ETPTPETKPQ).

Belongs to the ATG2 family.

It is found in the preautophagosomal structure membrane. The protein resides in the endoplasmic reticulum membrane. It catalyses the reaction a 1,2-diacyl-sn-glycero-3-phosphocholine(in) = a 1,2-diacyl-sn-glycero-3-phosphocholine(out). The enzyme catalyses a 1,2-diacyl-sn-glycero-3-phospho-L-serine(in) = a 1,2-diacyl-sn-glycero-3-phospho-L-serine(out). The catalysed reaction is a 1,2-diacyl-sn-glycero-3-phosphoethanolamine(in) = a 1,2-diacyl-sn-glycero-3-phosphoethanolamine(out). In terms of biological role, lipid transfer protein required for autophagosome completion and peroxisome degradation. Tethers the edge of the isolation membrane (IM) to the endoplasmic reticulum (ER) and mediates direct lipid transfer from ER to IM for IM expansion. ATG2 binds to the ER exit site (ERES), which is the membrane source for autophagosome formation, using basic residues in its N-terminal region (NR) and to the expanding edge of the IM through its C-terminal region. The latter binding is assisted by an ATG18-PtdIns3P interaction. ATG2 then extracts phospholipids from the membrane source using its NR and transfers them to ATG9 to the IM through its predicted beta-sheet-rich structure for membrane expansion. The protein is Autophagy-related protein 2 (ATG2) of Cryptococcus neoformans var. neoformans serotype D (strain B-3501A) (Filobasidiella neoformans).